The following is a 476-amino-acid chain: Sulfate adenylyltransferase subunit 1 (476 aa).

The 217-residue stretch at 25–241 (KSLLRFLTCG…LETVEVQRVV (217 aa)) folds into the tr-type G domain. The segment at 34–41 (GSVDDGKS) is G1. 34–41 (GSVDDGKS) serves as a coordination point for GTP. Positions 92–96 (GITID) are G2. The interval 113-116 (DTPG) is G3. Residues 113–117 (DTPGH) and 168–171 (NKMD) each bind GTP. The tract at residues 168–171 (NKMD) is G4. The segment at 206–208 (SAL) is G5.

Belongs to the TRAFAC class translation factor GTPase superfamily. Classic translation factor GTPase family. CysN/NodQ subfamily. Heterodimer composed of CysD, the smaller subunit, and CysN.

The catalysed reaction is sulfate + ATP + H(+) = adenosine 5'-phosphosulfate + diphosphate. Its pathway is sulfur metabolism; hydrogen sulfide biosynthesis; sulfite from sulfate: step 1/3. In terms of biological role, with CysD forms the ATP sulfurylase (ATPS) that catalyzes the adenylation of sulfate producing adenosine 5'-phosphosulfate (APS) and diphosphate, the first enzymatic step in sulfur assimilation pathway. APS synthesis involves the formation of a high-energy phosphoric-sulfuric acid anhydride bond driven by GTP hydrolysis by CysN coupled to ATP hydrolysis by CysD. This chain is Sulfate adenylyltransferase subunit 1, found in Erwinia tasmaniensis (strain DSM 17950 / CFBP 7177 / CIP 109463 / NCPPB 4357 / Et1/99).